The sequence spans 331 residues: Transmembrane protein 59-like (331 aa).

The first 21 residues, 1–21, serve as a signal peptide directing secretion; that stretch reads MAAVALPLLLLLASPATPTPA. A disordered region spans residues 15–62; the sequence is PATPTPARDPFSPQLGDTQRCQQRCRQRHPGLPPAQPEPEGPSESPNN. Residues 45 to 54 are compositionally biased toward pro residues; it reads GLPPAQPEPE. Residue Asn-90 is glycosylated (N-linked (GlcNAc...) asparagine). Residues 258–278 form a helical membrane-spanning segment; the sequence is VLFCCLFLSVLIILWLSCCTL. The Microbody targeting signal signature appears at 329-331; the sequence is TTL.

This sequence belongs to the TMEM59 family.

It localises to the golgi apparatus membrane. Functionally, modulates the O-glycosylation and complex N-glycosylation steps occurring during the Golgi maturation of APP. Inhibits APP transport to the cell surface and further shedding. The polypeptide is Transmembrane protein 59-like (Tmem59l) (Rattus norvegicus (Rat)).